Reading from the N-terminus, the 243-residue chain is UPF0246 protein SAK_2020 (243 aa).

It belongs to the UPF0246 family.

This is UPF0246 protein SAK_2020 from Streptococcus agalactiae serotype Ia (strain ATCC 27591 / A909 / CDC SS700).